Here is a 229-residue protein sequence, read N- to C-terminus: LexA repressor (229 aa).

A DNA-binding region (H-T-H motif) is located at residues 26–46 (FDEMKEALDLASKSGIHRLIT). Residues serine 149 and lysine 187 each act as for autocatalytic cleavage activity in the active site.

This sequence belongs to the peptidase S24 family. In terms of assembly, homodimer.

The catalysed reaction is Hydrolysis of Ala-|-Gly bond in repressor LexA.. Its function is as follows. Represses a number of genes involved in the response to DNA damage (SOS response), including recA and lexA. In the presence of single-stranded DNA, RecA interacts with LexA causing an autocatalytic cleavage which disrupts the DNA-binding part of LexA, leading to derepression of the SOS regulon and eventually DNA repair. This chain is LexA repressor, found in Phenylobacterium zucineum (strain HLK1).